The chain runs to 122 residues: Large ribosomal subunit protein uL14 (122 aa).

This sequence belongs to the universal ribosomal protein uL14 family. Part of the 50S ribosomal subunit. Forms a cluster with proteins L3 and L19. In the 70S ribosome, L14 and L19 interact and together make contacts with the 16S rRNA in bridges B5 and B8.

In terms of biological role, binds to 23S rRNA. Forms part of two intersubunit bridges in the 70S ribosome. The chain is Large ribosomal subunit protein uL14 from Thiobacillus denitrificans (strain ATCC 25259 / T1).